The following is a 203-amino-acid chain: MYEYLKGLVTAVNPYYVVLEVQGIGYQLQVANPYRYTESMSEVVQIFVHQAVRDTDITLFGFYDLDEKQLFQKLISVSGIGPKSALAILANSDHSGLIQAIMNDDIGYLTKFPGVGKKTAQQIALDLKGKLGDLEQSATLVGQTAIDLGSQGDSPELSDALAALSALGYSAREVKAITPKLTDFAAQTTDQYLREGLRLLMKK.

Residues 1 to 63 are domain I; the sequence is MYEYLKGLVT…DTDITLFGFY (63 aa). Residues 64-142 are domain II; that stretch reads DLDEKQLFQK…DLEQSATLVG (79 aa). The flexible linker stretch occupies residues 143–153; sequence QTAIDLGSQGD. Residues 153-203 form a domain III region; the sequence is DSPELSDALAALSALGYSAREVKAITPKLTDFAAQTTDQYLREGLRLLMKK.

This sequence belongs to the RuvA family. Homotetramer. Forms an RuvA(8)-RuvB(12)-Holliday junction (HJ) complex. HJ DNA is sandwiched between 2 RuvA tetramers; dsDNA enters through RuvA and exits via RuvB. An RuvB hexamer assembles on each DNA strand where it exits the tetramer. Each RuvB hexamer is contacted by two RuvA subunits (via domain III) on 2 adjacent RuvB subunits; this complex drives branch migration. In the full resolvosome a probable DNA-RuvA(4)-RuvB(12)-RuvC(2) complex forms which resolves the HJ.

It is found in the cytoplasm. In terms of biological role, the RuvA-RuvB-RuvC complex processes Holliday junction (HJ) DNA during genetic recombination and DNA repair, while the RuvA-RuvB complex plays an important role in the rescue of blocked DNA replication forks via replication fork reversal (RFR). RuvA specifically binds to HJ cruciform DNA, conferring on it an open structure. The RuvB hexamer acts as an ATP-dependent pump, pulling dsDNA into and through the RuvAB complex. HJ branch migration allows RuvC to scan DNA until it finds its consensus sequence, where it cleaves and resolves the cruciform DNA. The polypeptide is Holliday junction branch migration complex subunit RuvA (Latilactobacillus sakei subsp. sakei (strain 23K) (Lactobacillus sakei subsp. sakei)).